The following is a 141-amino-acid chain: Hemoglobin subunit alpha-1 (141 aa).

In terms of domain architecture, Globin spans 1 to 141; it reads VLTEDDKNHI…VAKTLVAHYR (141 aa). His58 is an O2 binding site. His87 serves as a coordination point for heme b.

Belongs to the globin family. In terms of assembly, heterotetramer of two alpha chains and two beta chains. As to expression, red blood cells.

Functionally, involved in oxygen transport from the lung to the various peripheral tissues. The polypeptide is Hemoglobin subunit alpha-1 (Iguana iguana (Common iguana)).